The sequence spans 899 residues: Core protein VP3 (899 aa).

Positions 1–22 (MAEPPDAATPKTSPYLKGDELS) are disordered.

This sequence belongs to the orbivirus VP3 family.

The protein localises to the virion. Its function is as follows. The VP3 protein is one of the five proteins (with VP1, VP4, VP6 and VP7) which form the inner capsid of the virus. This chain is Core protein VP3 (Segment-3), found in Antilocapra americana (Pronghorn).